Reading from the N-terminus, the 591-residue chain is Maintenance of mitochondrial morphology protein 1 (591 aa).

The Lumenal portion of the chain corresponds to methionine 1 to glycine 83. The chain crosses the membrane as a helical span at residues leucine 84–phenylalanine 104. The Cytoplasmic segment spans residues glycine 105–threonine 591. Disordered stretches follow at residues proline 138 to threonine 159, tyrosine 170 to serine 189, proline 334 to histidine 398, and glutamate 479 to threonine 591. Polar residues-rich tracts occupy residues serine 146–threonine 159 and tyrosine 170–serine 179. Residues lysine 180–serine 189 show a composition bias toward basic residues. Positions glutamine 192–proline 462 constitute an SMP-LTD domain. Residues threonine 336–arginine 371 show a composition bias toward polar residues. The segment covering proline 379–alanine 389 has biased composition (low complexity). 2 stretches are compositionally biased toward gly residues: residues threonine 496–tyrosine 525 and glycine 536–glycine 550. The span at glycine 563–phenylalanine 578 shows a compositional bias: basic and acidic residues.

The protein belongs to the MMM1 family. As to quaternary structure, homodimer. Component of the ER-mitochondria encounter structure (ERMES) or MDM complex, composed of MMM1, MDM10, MDM12 and MDM34. An MMM1 homodimer associates with one molecule of MDM12 on each side in a pairwise head-to-tail manner, and the SMP-LTD domains of MMM1 and MDM12 generate a continuous hydrophobic tunnel for phospholipid trafficking.

The protein localises to the endoplasmic reticulum membrane. Functionally, component of the ERMES/MDM complex, which serves as a molecular tether to connect the endoplasmic reticulum (ER) and mitochondria. Components of this complex are involved in the control of mitochondrial shape and protein biogenesis, and function in nonvesicular lipid trafficking between the ER and mitochondria. The MDM12-MMM1 subcomplex functions in the major beta-barrel assembly pathway that is responsible for biogenesis of all outer membrane beta-barrel proteins, and acts in a late step after the SAM complex. The MDM10-MDM12-MMM1 subcomplex further acts in the TOM40-specific pathway after the action of the MDM12-MMM1 complex. Essential for establishing and maintaining the structure of mitochondria and maintenance of mtDNA nucleoids. In Ajellomyces capsulatus (strain G186AR / H82 / ATCC MYA-2454 / RMSCC 2432) (Darling's disease fungus), this protein is Maintenance of mitochondrial morphology protein 1.